The primary structure comprises 397 residues: S-adenosylmethionine synthase (397 aa).

His-16 contributes to the ATP binding site. Asp-18 contributes to the Mg(2+) binding site. Glu-44 serves as a coordination point for K(+). 2 residues coordinate L-methionine: Glu-57 and Gln-100. Positions 100–110 (QSPDIAQGVNE) are flexible loop. Residues 175 to 177 (DAK), 242 to 243 (RF), Asp-251, 257 to 258 (RK), Ala-274, and Lys-278 contribute to the ATP site. Asp-251 provides a ligand contact to L-methionine. An L-methionine-binding site is contributed by Lys-282.

The protein belongs to the AdoMet synthase family. Homotetramer; dimer of dimers. Mg(2+) is required as a cofactor. It depends on K(+) as a cofactor.

It localises to the cytoplasm. The enzyme catalyses L-methionine + ATP + H2O = S-adenosyl-L-methionine + phosphate + diphosphate. It participates in amino-acid biosynthesis; S-adenosyl-L-methionine biosynthesis; S-adenosyl-L-methionine from L-methionine: step 1/1. In terms of biological role, catalyzes the formation of S-adenosylmethionine (AdoMet) from methionine and ATP. The overall synthetic reaction is composed of two sequential steps, AdoMet formation and the subsequent tripolyphosphate hydrolysis which occurs prior to release of AdoMet from the enzyme. The polypeptide is S-adenosylmethionine synthase (Streptococcus thermophilus (strain ATCC BAA-250 / LMG 18311)).